Reading from the N-terminus, the 200-residue chain is Riboflavin synthase (200 aa).

Lumazine-binding repeat units lie at residues 1–97 (MFSG…IGGH) and 98–190 (LLSG…VDTV). 2,4-dihydroxypteridine-binding positions include 4 to 6 (GII), 48 to 50 (CLT), 62 to 67 (DVIPET), 101 to 103 (GHV), Lys132, 141 to 143 (SLT), and 155 to 160 (GLIPET).

Homotrimer.

It catalyses the reaction 2 6,7-dimethyl-8-(1-D-ribityl)lumazine + H(+) = 5-amino-6-(D-ribitylamino)uracil + riboflavin. It functions in the pathway cofactor biosynthesis; riboflavin biosynthesis; riboflavin from 2-hydroxy-3-oxobutyl phosphate and 5-amino-6-(D-ribitylamino)uracil: step 2/2. Its function is as follows. Catalyzes the dismutation of two molecules of 6,7-dimethyl-8-ribityllumazine, resulting in the formation of riboflavin and 5-amino-6-(D-ribitylamino)uracil. The sequence is that of Riboflavin synthase (ribE) from Chlamydia pneumoniae (Chlamydophila pneumoniae).